The following is a 132-amino-acid chain: D-ribose pyranase (132 aa).

The active-site Proton donor is the H20. Residues D28, H98, and 121 to 123 (YSN) each bind substrate.

This sequence belongs to the RbsD / FucU family. RbsD subfamily. Homodecamer.

It is found in the cytoplasm. It carries out the reaction beta-D-ribopyranose = beta-D-ribofuranose. The protein operates within carbohydrate metabolism; D-ribose degradation; D-ribose 5-phosphate from beta-D-ribopyranose: step 1/2. In terms of biological role, catalyzes the interconversion of beta-pyran and beta-furan forms of D-ribose. The sequence is that of D-ribose pyranase from Kosmotoga olearia (strain ATCC BAA-1733 / DSM 21960 / TBF 19.5.1).